Here is a 300-residue protein sequence, read N- to C-terminus: MGTEGKAGSKLLFLFTSMILGSLVQGKGSVYSPQTAVQVPENDSVKLPCIYSGFSSPRVEWKFVQGSTTALVCYNNQITVPYADRVTFSSSGITFSSVTRKDNGEYTCMVSEDGGQNYGEVSIHLTVLVPPSKPTVSIPSSVTIGNRAVLTCSEHDGSPPSEYSWFKDGVPMLTADAKKTRAFINSSYTIDPKSGDLVFDPVSAFDSGEYYCEAQNGYGTAMRSEAVRMEAVELNVGGIVAAVLVTLILLGLLIFGIWFAYSRGYFERTKKGTAPGKKVIYSQPSARSEGEFKQTSSFLV.

The signal sequence occupies residues 1–26 (MGTEGKAGSKLLFLFTSMILGSLVQG). The Extracellular segment spans residues 27–238 (KGSVYSPQTA…MEAVELNVGG (212 aa)). 2 consecutive Ig-like V-type domains span residues 28–122 (GSVY…GEVS) and 134–228 (PTVS…EAVR). Intrachain disulfides connect Cys49–Cys108 and Cys152–Cys212. N-linked (GlcNAc...) asparagine glycosylation occurs at Asn185. Residues 239–259 (IVAAVLVTLILLGLLIFGIWF) traverse the membrane as a helical segment. Topologically, residues 260–300 (AYSRGYFERTKKGTAPGKKVIYSQPSARSEGEFKQTSSFLV) are cytoplasmic. Residues Ser282, Ser285, and Ser288 each carry the phosphoserine modification.

The protein belongs to the immunoglobulin superfamily. Interacts with the ninth PDZ domain of MPDZ. Interacts with the first PDZ domain of PARD3. The association between PARD3 and PARD6B probably disrupts this interaction. Interacts with ITGAL (via I-domain). Interacts with CD151. N-glycosylated.

The protein localises to the cell junction. The protein resides in the tight junction. Its subcellular location is the cell membrane. Its function is as follows. Seems to play a role in epithelial tight junction formation. Appears early in primordial forms of cell junctions and recruits PARD3. The association of the PARD6-PARD3 complex may prevent the interaction of PARD3 with JAM1, thereby preventing tight junction assembly. Plays a role in regulating monocyte transmigration involved in integrity of epithelial barrier. Ligand for integrin alpha-L/beta-2 involved in memory T-cell and neutrophil transmigration. The protein is Junctional adhesion molecule A (F11r) of Rattus norvegicus (Rat).